The sequence spans 463 residues: Asparagine--tRNA ligase (463 aa).

The protein belongs to the class-II aminoacyl-tRNA synthetase family. Homodimer.

Its subcellular location is the cytoplasm. It catalyses the reaction tRNA(Asn) + L-asparagine + ATP = L-asparaginyl-tRNA(Asn) + AMP + diphosphate + H(+). This chain is Asparagine--tRNA ligase, found in Desulfitobacterium hafniense (strain Y51).